Here is a 486-residue protein sequence, read N- to C-terminus: Elastin-binding protein EbpS (486 aa).

Positions 1-40 are enriched in basic and acidic residues; sequence MSNNFKDDFEKNRQSIDTNSHQDHTEDVEKDQSELEHQDT. Residues 1 to 314 are disordered; it reads MSNNFKDDFE…NHDRDKERKK (314 aa). At 2–204 the chain is on the extracellular side; it reads SNNFKDDFEK…ESKDHHSGKK (203 aa). The interval 14–34 is elastin-binding; the sequence is QSIDTNSHQDHTEDVEKDQSE. Polar residues predominate over residues 64–85; sequence TNHNKQVHNESQTSEDNVQNEA. Composition is skewed to basic and acidic residues over residues 103–118 and 126–149; these read EPSH…EEYY and DKSH…ENNT. The span at 150–166 shows a compositional bias: polar residues; sequence EHSTVSDKSIAEQSQQP. A compositionally biased stretch (basic and acidic residues) spans 180–199; that stretch reads SKDKHDDVTVKQDKDESKDH. Low complexity-rich tracts occupy residues 204-225 and 233-246; these read KGAA…MGVS and DAQN…SNNS. Residues 205–225 form a helical membrane-spanning segment; that stretch reads GAAIGAGTAGVAGAAGAMGVS. Residues 226-319 are Cytoplasmic-facing; it reads KAKKHSNDAQ…KERKKGGMAK (94 aa). The span at 247 to 259 shows a compositional bias: basic and acidic residues; the sequence is TEDKASQDKSKDH. The span at 278–297 shows a compositional bias: low complexity; the sequence is GAASKSASAASKPHASNNAS. A compositionally biased stretch (basic and acidic residues) spans 299-314; sequence NHDEHDNHDRDKERKK. A helical transmembrane segment spans residues 320–340; the sequence is VLLPLIAAVLIIGALAIFGGM. The Extracellular segment spans residues 341–486; that stretch reads ALNNHNNGTK…IRNGQQIVIP (146 aa). The interval 351-440 is disordered; that stretch reads ENKIANTNKN…QRQGGGQRHT (90 aa). Residues 361 to 398 show a composition bias toward basic and acidic residues; that stretch reads NADESKDKDTSKDASKDKSKSTDSDKSKEDQDKATKDE. The span at 403–431 shows a compositional bias: low complexity; sequence QNNANQANNQAQNNQNQQQANQNQQQQQQ. Positions 437–485 constitute a LysM domain; it reads QRHTVNGQENLYRIAIQYYGSGSPENVEKIRRANGLSGNNIRNGQQIVI.

It localises to the cell membrane. In terms of biological role, promotes binding of soluble elastin peptides and tropoelastin to S.aureus cells although it is not able to promote bacterial adherence to immobilized elastin and, therefore, is not a microbial surface component recognizing adhesive matrix molecule (MSCRAMM). The protein is Elastin-binding protein EbpS (ebpS) of Staphylococcus aureus (strain Mu50 / ATCC 700699).